The following is a 309-amino-acid chain: Probable ABC transporter permease protein YqgH (309 aa).

6 helical membrane passes run 30 to 50, 88 to 108, 133 to 153, 165 to 185, 214 to 234, and 280 to 300; these read MIVT…TIFL, FIFG…PLGI, LVGI…VPFI, LLAG…SISA, LVPA…ARAF, and NTLW…ILLI. Positions 89–300 constitute an ABC transmembrane type-1 domain; the sequence is IFGSFAVTIL…VMSFLFILLI (212 aa).

It belongs to the binding-protein-dependent transport system permease family. CysTW subfamily.

It localises to the cell membrane. Part of the binding-protein-dependent transport system YqgGHIJK. Probably responsible for the translocation of the substrate across the membrane. The protein is Probable ABC transporter permease protein YqgH (yqgH) of Bacillus subtilis (strain 168).